A 211-amino-acid polypeptide reads, in one-letter code: Large ribosomal subunit protein uL3 (211 aa).

The protein belongs to the universal ribosomal protein uL3 family. In terms of assembly, part of the 50S ribosomal subunit. Forms a cluster with proteins L14 and L19.

Its function is as follows. One of the primary rRNA binding proteins, it binds directly near the 3'-end of the 23S rRNA, where it nucleates assembly of the 50S subunit. In Citrifermentans bemidjiense (strain ATCC BAA-1014 / DSM 16622 / JCM 12645 / Bem) (Geobacter bemidjiensis), this protein is Large ribosomal subunit protein uL3.